The sequence spans 390 residues: Succinyl-diaminopimelate desuccinylase 1 (390 aa).

Histidine 76 is a binding site for Zn(2+). Aspartate 78 is an active-site residue. Position 109 (aspartate 109) interacts with Zn(2+). Glutamate 143 (proton acceptor) is an active-site residue. 3 residues coordinate Zn(2+): glutamate 144, glutamate 172, and histidine 363.

It belongs to the peptidase M20A family. DapE subfamily. Homodimer. It depends on Zn(2+) as a cofactor. The cofactor is Co(2+).

The catalysed reaction is N-succinyl-(2S,6S)-2,6-diaminopimelate + H2O = (2S,6S)-2,6-diaminopimelate + succinate. It functions in the pathway amino-acid biosynthesis; L-lysine biosynthesis via DAP pathway; LL-2,6-diaminopimelate from (S)-tetrahydrodipicolinate (succinylase route): step 3/3. Its function is as follows. Catalyzes the hydrolysis of N-succinyl-L,L-diaminopimelic acid (SDAP), forming succinate and LL-2,6-diaminopimelate (DAP), an intermediate involved in the bacterial biosynthesis of lysine and meso-diaminopimelic acid, an essential component of bacterial cell walls. In Alteromonas mediterranea (strain DSM 17117 / CIP 110805 / LMG 28347 / Deep ecotype), this protein is Succinyl-diaminopimelate desuccinylase 1.